Consider the following 443-residue polypeptide: Gasdermin-A2 (443 aa).

Residues 1 to 249 (MSMFEDVTRA…QGSTVQMISG (249 aa)) are triggers pyroptosis. 9-13 (RALAR) lines the a cardiolipin pocket. The next 4 membrane-spanning stretches (beta stranded) occupy residues 78–95 (NFSF…DVEV), 99–120 (MKVK…MLSV), 164–179 (VTLK…FSLN), and 183–197 (LGLQ…AVTI). Residues 249-312 (GEMHEDFKTL…GALDKGHEVT (64 aa)) are a coiled coil.

Belongs to the gasdermin family. In terms of assembly, homooligomer; homooligomeric ring-shaped pore complex containing 18-36 subunits when inserted in the membrane. Cleavage relieves autoinhibition by releasing the N-terminal moiety (Gasdermin-A2, N-terminal) that initiates pyroptosis. In contrast to Gsdma, not cleaved by bacterial effector protein SpeB. In terms of processing, palmitoylated. In terms of tissue distribution, expressed in the gastrointestinal tract, specifically from the middle to the upper region of the gastric mucosa in the glandular stomach.

It is found in the cytoplasm. It localises to the perinuclear region. The protein localises to the cytosol. Its subcellular location is the cell membrane. Its activity is regulated as follows. The full-length protein before cleavage is inactive: intramolecular interactions between N- and C-terminal domains mediate autoinhibition in the absence of activation signal. The intrinsic pyroptosis-inducing activity is carried by the released N-terminal moiety (Gasdermin-A2, N-terminal). Its function is as follows. This form constitutes the precursor of the pore-forming protein and acts as a sensor of infection: upon bacterial infection, specifically cleaved by some bacterial effector protein, releasing the N-terminal moiety (Gasdermin-A2, N-terminal) that binds to membranes and forms pores, triggering pyroptosis. Pore-forming protein that causes membrane permeabilization and pyroptosis. Released upon cleavage of Gasdermin-A2, and binds to membrane inner leaflet lipids. Homooligomerizes within the membrane and forms pores of 10-15 nanometers (nm) of inner diameter, triggering pyroptosis. Binds to membrane inner leaflet lipids, such as phosphatidylinositol (4,5)-bisphosphate. This is Gasdermin-A2 from Mus musculus (Mouse).